A 98-amino-acid chain; its full sequence is Integration host factor subunit alpha (98 aa).

The segment at 51–71 (NFDLRDKNERPGRNPKTGEDI) is disordered. A compositionally biased stretch (basic and acidic residues) spans 53–69 (DLRDKNERPGRNPKTGE).

The protein belongs to the bacterial histone-like protein family. Heterodimer of an alpha and a beta chain.

In terms of biological role, this protein is one of the two subunits of integration host factor, a specific DNA-binding protein that functions in genetic recombination as well as in transcriptional and translational control. The protein is Integration host factor subunit alpha of Vibrio cholerae serotype O1 (strain ATCC 39541 / Classical Ogawa 395 / O395).